The sequence spans 138 residues: Large ribosomal subunit protein uL16 (138 aa).

This sequence belongs to the universal ribosomal protein uL16 family. Part of the 50S ribosomal subunit.

Its function is as follows. Binds 23S rRNA and is also seen to make contacts with the A and possibly P site tRNAs. The polypeptide is Large ribosomal subunit protein uL16 (Gluconacetobacter diazotrophicus (strain ATCC 49037 / DSM 5601 / CCUG 37298 / CIP 103539 / LMG 7603 / PAl5)).